Consider the following 494-residue polypeptide: UPF0371 protein Sez_1293 (494 aa).

This sequence belongs to the UPF0371 family.

The protein is UPF0371 protein Sez_1293 of Streptococcus equi subsp. zooepidemicus (strain MGCS10565).